The primary structure comprises 213 residues: Orotate phosphoribosyltransferase (213 aa).

K26 contributes to the 5-phospho-alpha-D-ribose 1-diphosphate binding site. 34–35 is an orotate binding site; it reads FF. Residues 72 to 73, R99, K100, K103, H105, and 124 to 132 contribute to the 5-phospho-alpha-D-ribose 1-diphosphate site; these read YK and DDVITAGTA. 2 residues coordinate orotate: T128 and R156.

This sequence belongs to the purine/pyrimidine phosphoribosyltransferase family. PyrE subfamily. Homodimer. The cofactor is Mg(2+).

The enzyme catalyses orotidine 5'-phosphate + diphosphate = orotate + 5-phospho-alpha-D-ribose 1-diphosphate. It functions in the pathway pyrimidine metabolism; UMP biosynthesis via de novo pathway; UMP from orotate: step 1/2. Functionally, catalyzes the transfer of a ribosyl phosphate group from 5-phosphoribose 1-diphosphate to orotate, leading to the formation of orotidine monophosphate (OMP). The polypeptide is Orotate phosphoribosyltransferase (Alteromonas mediterranea (strain DSM 17117 / CIP 110805 / LMG 28347 / Deep ecotype)).